Consider the following 447-residue polypeptide: Probable protein phosphatase 2C 71 (447 aa).

The 247-residue stretch at 33–279 (SYGYASSAGK…DNITCVVVRF (247 aa)) folds into the PPM-type phosphatase domain. Mn(2+)-binding residues include aspartate 69, glycine 70, aspartate 231, and aspartate 270. The segment covering 284–297 (SANNNGSSSSEEAN) has biased composition (low complexity). The segment at 284-447 (SANNNGSSSS…ARKTTPSIFN (164 aa)) is disordered. Positions 305–331 (NDSDHKISAKETNQDHTTVNKDLDRNT) are enriched in basic and acidic residues. Composition is skewed to polar residues over residues 346–374 (ADNS…TGEK) and 392–423 (KVPN…GSTG). Positions 424–438 (ERNRKPIKVHSDSAA) are enriched in basic and acidic residues.

The protein belongs to the PP2C family. Mg(2+) is required as a cofactor. It depends on Mn(2+) as a cofactor.

The enzyme catalyses O-phospho-L-seryl-[protein] + H2O = L-seryl-[protein] + phosphate. It carries out the reaction O-phospho-L-threonyl-[protein] + H2O = L-threonyl-[protein] + phosphate. In Arabidopsis thaliana (Mouse-ear cress), this protein is Probable protein phosphatase 2C 71.